Here is a 431-residue protein sequence, read N- to C-terminus: Acyl transferase 8 (431 aa).

H169 acts as the Proton acceptor in catalysis. Disordered stretches follow at residues 220 to 247 (VADARGGVRPGVPRPRVLRHERAPRAPA), 260 to 313 (HHAG…DHLR), and 331 to 400 (GLRV…PPPT). The span at 224–234 (RGGVRPGVPRP) shows a compositional bias: low complexity. The span at 264 to 273 (DGGGGGGGGR) shows a compositional bias: gly residues. Basic residues-rich tracts occupy residues 297–306 (ERRRRRRRGR) and 335–380 (GRPR…RRLP). Positions 381 to 394 (QRHDAPRLITERAH) are enriched in basic and acidic residues.

It belongs to the plant acyltransferase family.

Its function is as follows. Involved in the incorporation of ferulate into the cell wall. May act as arabinoxylan feruloyl transferase. In Oryza sativa subsp. japonica (Rice), this protein is Acyl transferase 8.